The following is a 71-amino-acid chain: Small integral membrane protein 31 (71 aa).

The helical transmembrane segment at 8–28 (LEVAFILLAFFIFSLFTLASI) threads the bilayer. Residues 48–57 (RKRKEFKGKK) are compositionally biased toward basic residues. The interval 48-71 (RKRKEFKGKKNCSDEEHKIETMQP) is disordered. N-linked (GlcNAc...) asparagine glycosylation occurs at N58. Residues 58 to 71 (NCSDEEHKIETMQP) show a composition bias toward basic and acidic residues.

The protein localises to the membrane. This is Small integral membrane protein 31 from Mus musculus (Mouse).